We begin with the raw amino-acid sequence, 692 residues long: Elongation factor G (692 aa).

The tr-type G domain maps to 9–284 (HMVRNIGIAA…AVVDYLPAPD (276 aa)). Residues 18–25 (AHIDAGKT), 82–86 (DTPGH), and 136–139 (NKMD) each bind GTP.

Belongs to the TRAFAC class translation factor GTPase superfamily. Classic translation factor GTPase family. EF-G/EF-2 subfamily.

The protein localises to the cytoplasm. Its function is as follows. Catalyzes the GTP-dependent ribosomal translocation step during translation elongation. During this step, the ribosome changes from the pre-translocational (PRE) to the post-translocational (POST) state as the newly formed A-site-bound peptidyl-tRNA and P-site-bound deacylated tRNA move to the P and E sites, respectively. Catalyzes the coordinated movement of the two tRNA molecules, the mRNA and conformational changes in the ribosome. This Campylobacter curvus (strain 525.92) protein is Elongation factor G.